The chain runs to 157 residues: Methylamine utilization protein MauL (157 aa).

The protein operates within one-carbon metabolism; methylamine degradation. Probably involved in TTQ prosthetic group biosynthesis. In Methylobacillus flagellatus (strain ATCC 51484 / DSM 6875 / VKM B-1610 / KT), this protein is Methylamine utilization protein MauL (mauL).